We begin with the raw amino-acid sequence, 461 residues long: Bifunctional protein GlmU (461 aa).

The segment at 1–236 (MNVLLQELFI…VFEIFGINNR (236 aa)) is pyrophosphorylase. UDP-N-acetyl-alpha-D-glucosamine is bound by residues Lys27, Gln80, 85-86 (GT), 109-111 (YGD), Gly146, Glu160, Asn175, and Asn234. Asp111 is a Mg(2+) binding site. Mg(2+) is bound at residue Asn234. Residues 237–257 (FQLMKLEKIYQIEQAKKLLLN) are linker. Positions 258–461 (GVTLSDYNRF…SILRKENNSK (204 aa)) are N-acetyltransferase. UDP-N-acetyl-alpha-D-glucosamine is bound at residue Lys358. His370 (proton acceptor) is an active-site residue. The UDP-N-acetyl-alpha-D-glucosamine site is built by Tyr373 and Asn384. The acetyl-CoA site is built by Ala387, Ala430, and Arg447.

The protein in the N-terminal section; belongs to the N-acetylglucosamine-1-phosphate uridyltransferase family. It in the C-terminal section; belongs to the transferase hexapeptide repeat family. In terms of assembly, homotrimer. Requires Mg(2+) as cofactor.

Its subcellular location is the cytoplasm. The enzyme catalyses alpha-D-glucosamine 1-phosphate + acetyl-CoA = N-acetyl-alpha-D-glucosamine 1-phosphate + CoA + H(+). It catalyses the reaction N-acetyl-alpha-D-glucosamine 1-phosphate + UTP + H(+) = UDP-N-acetyl-alpha-D-glucosamine + diphosphate. It functions in the pathway nucleotide-sugar biosynthesis; UDP-N-acetyl-alpha-D-glucosamine biosynthesis; N-acetyl-alpha-D-glucosamine 1-phosphate from alpha-D-glucosamine 6-phosphate (route II): step 2/2. The protein operates within nucleotide-sugar biosynthesis; UDP-N-acetyl-alpha-D-glucosamine biosynthesis; UDP-N-acetyl-alpha-D-glucosamine from N-acetyl-alpha-D-glucosamine 1-phosphate: step 1/1. Its pathway is bacterial outer membrane biogenesis; LPS lipid A biosynthesis. Its function is as follows. Catalyzes the last two sequential reactions in the de novo biosynthetic pathway for UDP-N-acetylglucosamine (UDP-GlcNAc). The C-terminal domain catalyzes the transfer of acetyl group from acetyl coenzyme A to glucosamine-1-phosphate (GlcN-1-P) to produce N-acetylglucosamine-1-phosphate (GlcNAc-1-P), which is converted into UDP-GlcNAc by the transfer of uridine 5-monophosphate (from uridine 5-triphosphate), a reaction catalyzed by the N-terminal domain. The protein is Bifunctional protein GlmU of Wigglesworthia glossinidia brevipalpis.